The chain runs to 314 residues: Olfactory receptor 11H7 (314 aa).

Topologically, residues 1-24 are extracellular; sequence MNNSQISTVTQFVLLGFPGPWKIQ. An N-linked (GlcNAc...) asparagine glycan is attached at N2. A helical transmembrane segment spans residues 25 to 45; that stretch reads IIFFSMILLVYIFTLTGNMAI. Residues 46-57 are Cytoplasmic-facing; sequence ICAVRWDHRLHT. Residues 58–78 form a helical membrane-spanning segment; that stretch reads PMYVLLANFSFLEIWYVTCTV. The Extracellular segment spans residues 79-97; that stretch reads PNMLVNFFSKTKTISFSGC. C97 and C179 are disulfide-bonded. The helical transmembrane segment at 98–118 threads the bilayer; it reads FTQFHFFFSLGTTECFFLCVM. The Cytoplasmic portion of the chain corresponds to 119-142; that stretch reads AYDRYLAICHPLHYPSIMTGQLCG. Residues 143 to 163 form a helical membrane-spanning segment; that stretch reads ILVSLCWLIGFLGHSISIFFI. Residues 164 to 201 are Extracellular-facing; the sequence is FQLPFCGPNIIDHFLCDVDPLMALSSAPTHIIGHVFHS. Residues 202–222 form a helical membrane-spanning segment; sequence VSSLFINLTMVYILGSYTLVL. The Cytoplasmic segment spans residues 223 to 244; that stretch reads RTVLQVPSSAGWQKAISTCGSH. A helical transmembrane segment spans residues 245-265; the sequence is LVVVSLFYGAIMLMYVSPTPG. The Extracellular segment spans residues 266 to 271; it reads NSVAMH. A helical membrane pass occupies residues 272 to 292; it reads KLITLIYSVVTPVLNPLIYSL. Residues 293–314 are Cytoplasmic-facing; the sequence is RNKDMKYALHHVFCGMRIIQRS.

This sequence belongs to the G-protein coupled receptor 1 family.

The protein resides in the cell membrane. Odorant receptor. Activated by isovaleric acid. The protein is Olfactory receptor 11H7 (OR11H7) of Homo sapiens (Human).